Reading from the N-terminus, the 461-residue chain is Alkaline phosphatase 4 (461 aa).

A signal peptide spans 1-41 (MKKMSLFQNMKSKLLPIAAVSVLTAGIFAGAELQQTEKASA). Aspartate 58 contributes to the Mg(2+) binding site. Position 58 (aspartate 58) interacts with Zn(2+). Serine 108 acts as the Phosphoserine intermediate in catalysis. Residues threonine 161 and glutamate 282 each contribute to the Mg(2+) site. Residues aspartate 287, histidine 291, aspartate 329, histidine 330, and histidine 423 each coordinate Zn(2+).

It belongs to the alkaline phosphatase family. Monomer. Mg(2+) is required as a cofactor. It depends on Zn(2+) as a cofactor.

The enzyme catalyses a phosphate monoester + H2O = an alcohol + phosphate. The protein is Alkaline phosphatase 4 (phoA) of Bacillus subtilis (strain 168).